A 35-amino-acid polypeptide reads, in one-letter code: Alpha-amanitin proprotein 1 (35 aa).

Positions 1-10 (MSDINATRLP) are excised as a propeptide. (3R,4R)-4,5-dihydroxyisoleucine; in form alpha-amanitin is present on isoleucine 11. Isoleucine 11 carries the post-translational modification (3R,4S)-4-hydroxyisoleucine; in form gamma-amanitin. A cross-link (cyclopeptide (Ile-Pro)) is located at residues 11-18 (IWGIGCNP). A cross-link (2'-cysteinyl-6'-hydroxytryptophan sulfoxide (Trp-Cys)) is located at residues 12-16 (WGIGC). A 4-hydroxyproline modification is found at proline 18. Residues 19 to 35 (CVGDDVTSVLTRGEALC) constitute a propeptide that is removed on maturation.

Belongs to the MSDIN fungal toxin family. Post-translationally, processed by the macrocyclase-peptidase enzyme POPB to yield a toxic cyclic octapeptide. POPB first removes 10 residues from the N-terminus. Conformational trapping of the remaining peptide forces the enzyme to release this intermediate rather than proceed to macrocyclization. The enzyme rebinds the remaining peptide in a different conformation and catalyzes macrocyclization of the N-terminal 8 residues. As to expression, expressed in basidiocarps.

Its function is as follows. Major toxin belonging to the bicyclic octapeptides amatoxins that acts by binding non-competitively to RNA polymerase II and greatly slowing the elongation of transcripts from target promoters. This chain is Alpha-amanitin proprotein 1, found in Amanita exitialis (Guangzhou destroying angel).